The chain runs to 873 residues: Nitrate reductase [NADPH] (873 aa).

The tract at residues 30–61 (TELDTADIPLPPPSKEPTEVLSLDKTTPDSHV) is disordered. Cys150 contributes to the Mo-molybdopterin binding site. The region spanning 512 to 587 (TRIIDLEEFK…MPDYHIGTLD (76 aa)) is the Cytochrome b5 heme-binding domain. The heme site is built by His547 and His570. The region spanning 616–729 (KAWTKATLTK…KGPTGRFEYL (114 aa)) is the FAD-binding FR-type domain. FAD contacts are provided by residues 672-675 (RSYT), 689-693 (LIKIY), 703-705 (KMT), and Thr756. 843 to 852 (MVLVCGPEAM) is a binding site for NADP(+).

The protein belongs to the nitrate reductase family. As to quaternary structure, homodimer. The cofactor is FAD. It depends on heme as a cofactor. Mo-molybdopterin is required as a cofactor.

It catalyses the reaction nitrite + NADP(+) + H2O = nitrate + NADPH + H(+). In terms of biological role, nitrate reductase is a key enzyme involved in the first step of nitrate assimilation in plants, fungi and bacteria. In Emericella nidulans (strain FGSC A4 / ATCC 38163 / CBS 112.46 / NRRL 194 / M139) (Aspergillus nidulans), this protein is Nitrate reductase [NADPH] (niaD).